The chain runs to 598 residues: Pescadillo homolog (598 aa).

The interval 296–317 (QAMKADSKDKDDNSNDEAPENV) is disordered. Residues 345 to 439 (PTATLFEDFV…ELLSANLYLP (95 aa)) form the BRCT domain. 3 disordered regions span residues 452-501 (DALG…EDVE), 515-544 (GIAYSKAKDEGLHDDVASKKKRKVTDEDEE), and 564-598 (MKYSNQQKEDKIEELKKKKKQLAKKEKTLKKVEKK). Residues 463–485 (ESEDESSDSSEESDSEIENEEED) show a composition bias toward acidic residues. Basic and acidic residues-rich tracts occupy residues 520–532 (KAKDEGLHDDVAS), 570–579 (QKEDKIEELK), and 586–598 (AKKEKTLKKVEKK). Positions 557-598 (QRKLYKKMKYSNQQKEDKIEELKKKKKQLAKKEKTLKKVEKK) form a coiled coil.

Belongs to the pescadillo family. Component of the NOP7 complex, composed of ERB1, NOP7 and YTM1. The complex is held together by ERB1, which interacts with NOP7 via its N-terminal domain and with YTM1 via a high-affinity interaction between the seven-bladed beta-propeller domains of the 2 proteins. The NOP7 complex associates with the 66S pre-ribosome.

It localises to the nucleus. Its subcellular location is the nucleolus. It is found in the nucleoplasm. Its function is as follows. Component of the NOP7 complex, which is required for maturation of the 25S and 5.8S ribosomal RNAs and formation of the 60S ribosome. In Candida glabrata (strain ATCC 2001 / BCRC 20586 / JCM 3761 / NBRC 0622 / NRRL Y-65 / CBS 138) (Yeast), this protein is Pescadillo homolog.